The sequence spans 649 residues: Acetyl-coenzyme A synthetase (649 aa).

CoA is bound by residues Arg-191–Arg-194, Thr-309, and Asn-333. ATP-binding positions include Gly-385–Pro-387, Asp-409–Thr-414, Asp-498, and Arg-513. Residue Ser-521 coordinates CoA. Position 524 (Arg-524) interacts with ATP. Val-535, His-537, and Val-540 together coordinate Mg(2+). CoA is bound at residue Arg-582. Lys-607 is subject to N6-acetyllysine.

It belongs to the ATP-dependent AMP-binding enzyme family. Requires Mg(2+) as cofactor. In terms of processing, acetylated. Deacetylation by the SIR2-homolog deacetylase activates the enzyme.

The enzyme catalyses acetate + ATP + CoA = acetyl-CoA + AMP + diphosphate. Catalyzes the conversion of acetate into acetyl-CoA (AcCoA), an essential intermediate at the junction of anabolic and catabolic pathways. AcsA undergoes a two-step reaction. In the first half reaction, AcsA combines acetate with ATP to form acetyl-adenylate (AcAMP) intermediate. In the second half reaction, it can then transfer the acetyl group from AcAMP to the sulfhydryl group of CoA, forming the product AcCoA. This chain is Acetyl-coenzyme A synthetase, found in Novosphingobium aromaticivorans (strain ATCC 700278 / DSM 12444 / CCUG 56034 / CIP 105152 / NBRC 16084 / F199).